A 718-amino-acid chain; its full sequence is Nucleolar protein 11 (718 aa).

The residue at position 346 (Lys-346) is an N6-methyllysine.

As to quaternary structure, interacts with UTP4. Interacts with FBL/fibrillarin in a transcription-dependent manner. May associate with the proposed t-UTP subcomplex of the SSU processome containing at least UTP4, WDR43, HEATR1, UTP15, WDR75.

It localises to the nucleus. The protein resides in the nucleolus. Its function is as follows. Ribosome biogenesis factor. May be required for both optimal rDNA transcription and small subunit (SSU) pre-rRNA processing at sites A', A0, 1 and 2b. The sequence is that of Nucleolar protein 11 (NOL11) from Pongo abelii (Sumatran orangutan).